Here is a 156-residue protein sequence, read N- to C-terminus: Small ribosomal subunit protein uS7c (156 aa).

This sequence belongs to the universal ribosomal protein uS7 family. As to quaternary structure, part of the 30S ribosomal subunit.

The protein localises to the plastid. Its subcellular location is the chloroplast. Functionally, one of the primary rRNA binding proteins, it binds directly to 16S rRNA where it nucleates assembly of the head domain of the 30S subunit. The polypeptide is Small ribosomal subunit protein uS7c (rps7) (Pisum sativum (Garden pea)).